The following is a 120-amino-acid chain: Large ribosomal subunit protein uL29 (120 aa).

It belongs to the universal ribosomal protein uL29 family. As to quaternary structure, component of the large ribosomal subunit. Mature ribosomes consist of a small (40S) and a large (60S) subunit. The 40S subunit contains about 32 different proteins and 1 molecule of RNA (18S). The 60S subunit contains 45 different proteins and 3 molecules of RNA (25S, 5.8S and 5S).

It localises to the cytoplasm. In terms of biological role, component of the ribosome, a large ribonucleoprotein complex responsible for the synthesis of proteins in the cell. The small ribosomal subunit (SSU) binds messenger RNAs (mRNAs) and translates the encoded message by selecting cognate aminoacyl-transfer RNA (tRNA) molecules. The large subunit (LSU) contains the ribosomal catalytic site termed the peptidyl transferase center (PTC), which catalyzes the formation of peptide bonds, thereby polymerizing the amino acids delivered by tRNAs into a polypeptide chain. The nascent polypeptides leave the ribosome through a tunnel in the LSU and interact with protein factors that function in enzymatic processing, targeting, and the membrane insertion of nascent chains at the exit of the ribosomal tunnel. The polypeptide is Large ribosomal subunit protein uL29 (Candida albicans (strain SC5314 / ATCC MYA-2876) (Yeast)).